The chain runs to 148 residues: MGLITTEPRSSPHPLSPRLVHELGDPHSTLRATTDGSGAALLIHAGGEIDGRNEHLWRQLVTEAAAGVTAPGPLIVDVTGLDFMGCCAFAALADEAQRCRCRGIDLRLVSHQPIVARIAEAGGLSRVLPIYPTVDTALGKGTAGPARC.

The region spanning 30–141 (LRATTDGSGA…PTVDTALGKG (112 aa)) is the STAS domain.

The protein belongs to the anti-sigma-factor antagonist family. As to quaternary structure, interacts with unphosphorylated OprA.

This chain is Putative anti-anti-sigma factor Rv2638, found in Mycobacterium tuberculosis (strain ATCC 25618 / H37Rv).